A 377-amino-acid chain; its full sequence is Succinyl-diaminopimelate desuccinylase (377 aa).

Position 66 (histidine 66) interacts with Zn(2+). Aspartate 68 is a catalytic residue. Aspartate 99 serves as a coordination point for Zn(2+). Catalysis depends on glutamate 133, which acts as the Proton acceptor. The Zn(2+) site is built by glutamate 134, glutamate 162, and histidine 348.

This sequence belongs to the peptidase M20A family. DapE subfamily. In terms of assembly, homodimer. Requires Zn(2+) as cofactor. The cofactor is Co(2+).

It carries out the reaction N-succinyl-(2S,6S)-2,6-diaminopimelate + H2O = (2S,6S)-2,6-diaminopimelate + succinate. Its pathway is amino-acid biosynthesis; L-lysine biosynthesis via DAP pathway; LL-2,6-diaminopimelate from (S)-tetrahydrodipicolinate (succinylase route): step 3/3. Catalyzes the hydrolysis of N-succinyl-L,L-diaminopimelic acid (SDAP), forming succinate and LL-2,6-diaminopimelate (DAP), an intermediate involved in the bacterial biosynthesis of lysine and meso-diaminopimelic acid, an essential component of bacterial cell walls. In Alcanivorax borkumensis (strain ATCC 700651 / DSM 11573 / NCIMB 13689 / SK2), this protein is Succinyl-diaminopimelate desuccinylase.